Here is a 761-residue protein sequence, read N- to C-terminus: Complement factor B (761 aa).

A signal peptide spans 1–25 (MGIGHNPRLCLVPLILGLLCGGVGM). Sushi domains follow at residues 35 to 100 (SPCS…ECKA), 101 to 160 (IRCP…ICDD), and 163 to 220 (TYCP…SCQD). 6 cysteine pairs are disulfide-bonded: cysteine 37–cysteine 76, cysteine 62–cysteine 98, cysteine 103–cysteine 145, cysteine 131–cysteine 158, cysteine 165–cysteine 205, and cysteine 191–cysteine 218. 2 N-linked (GlcNAc...) asparagine glycosylation sites follow: asparagine 122 and asparagine 142. One can recognise a VWFA domain in the interval 270-469 (NIYLVLDGSD…NLEDVFVQML (200 aa)). 2 residues coordinate Mg(2+): serine 278 and serine 280. A glycan (N-linked (GlcNAc...) asparagine) is linked at asparagine 285. Position 353 (threonine 353) interacts with Mg(2+). Asparagine 378 carries N-linked (GlcNAc...) asparagine glycosylation. Positions 477-754 (LCGMVWEHKD…VLPWLKEKLQ (278 aa)) constitute a Peptidase S1 domain. Intrachain disulfides connect cysteine 478–cysteine 596, cysteine 511–cysteine 527, cysteine 599–cysteine 615, cysteine 656–cysteine 682, and cysteine 695–cysteine 725. Residues histidine 526 and aspartate 576 each act as charge relay system in the active site. Serine 699 functions as the Charge relay system in the catalytic mechanism.

It belongs to the peptidase S1 family. Monomer. Interacts with complement C3b; this interaction is dependent on the presence of Mg(2+). As to quaternary structure, catalytic component of the C3 convertase of the alternative complement pathway, also named C3bBb, composed of complement factor B Bb and complement C3b. Catalytic component of the C5 convertase of the alternative complement pathway, also named C3bBb3b, composed of complement factor B Bb and additional molecules of complement C3b. Interacts to CFP; this interaction contributes to the stabilization of the active C3-convertase enzyme complex. Mg(2+) is required as a cofactor. Mn(2+) serves as cofactor. In terms of processing, cleaved by CFD following activation of the alternative complement system, generating Ba and Bb chains. Cleavage and activation takes place when CFB is already associated with complement C3b.

The protein resides in the secreted. The protein localises to the cell surface. The enzyme catalyses Cleavage of Arg-|-Ser bond in complement component C3 alpha-chain to yield C3a and C3b, and Arg-|-Xaa bond in complement component C5 alpha-chain to yield C5a and C5b.. Precursor of the catalytic component of the C3 and C5 convertase complexes of the alternative pathway of the complement system, a cascade of proteins that leads to phagocytosis and breakdown of pathogens and signaling that strengthens the adaptive immune system. The alternative complement pathway acts as an amplification loop that enhances other complement pathways (classical, lectin and GZMK) by promoting formation of additional C3 and C5 convertases. CFB is cleaved and activated by CFD to generate Ba and Bb chains; Bb chain constituting the catalytic component of the C3 and C5 convertases. In terms of biological role, serine protease component of the complement C3 and C5 convertase complexes of the alternative complement pathway. Following cleavage and activation by factor D (CFD), forms the C3 convertase together with complement C3b. As part of the C3 convertase, cleaves and activates C3 into C3a anaphylatoxin and C3b opsonin, the next components of the complement pathways. When an additional complement C3b molecule binds to the C3 convertase, forms the C5 convertase, which cleaves and activates C5 into C5a anaphylatoxin and C5b component of the membrane attack complex. Its function is as follows. Involved in proliferation and differentiation of preactivated B-lymphocytes, rapid spreading of peripheral blood monocytes, stimulation of lymphocyte blastogenesis and lysis of erythrocytes. The chain is Complement factor B (CFB) from Bos taurus (Bovine).